The chain runs to 268 residues: Shikimate dehydrogenase (NADP(+)) (268 aa).

Shikimate-binding positions include 13–15 (SLS) and Thr60. The active-site Proton acceptor is Lys64. Asp76 contacts NADP(+). 2 residues coordinate shikimate: Asn85 and Asp100. NADP(+)-binding positions include 124-128 (GAGGA), 148-153 (NRTMSR), and Ile209. Tyr211 contributes to the shikimate binding site. Gly232 is a binding site for NADP(+).

The protein belongs to the shikimate dehydrogenase family. As to quaternary structure, homodimer.

It carries out the reaction shikimate + NADP(+) = 3-dehydroshikimate + NADPH + H(+). It functions in the pathway metabolic intermediate biosynthesis; chorismate biosynthesis; chorismate from D-erythrose 4-phosphate and phosphoenolpyruvate: step 4/7. Functionally, involved in the biosynthesis of the chorismate, which leads to the biosynthesis of aromatic amino acids. Catalyzes the reversible NADPH linked reduction of 3-dehydroshikimate (DHSA) to yield shikimate (SA). The protein is Shikimate dehydrogenase (NADP(+)) of Staphylococcus haemolyticus (strain JCSC1435).